The chain runs to 1085 residues: Ubiquitin carboxyl-terminal hydrolase 36 (1085 aa).

The segment covering 23–36 (GGNSSAAGSSADQA) has biased composition (low complexity). Disordered stretches follow at residues 23 to 47 (GGNS…GSLQ) and 104 to 149 (KVVG…PKPK). A USP domain is found at 173-481 (TGMINVGNTC…NAYIMFYELD (309 aa)). Cys182 serves as the catalytic Nucleophile. The active-site Proton acceptor is the His440. Disordered regions lie at residues 489 to 730 (AANR…NNSK), 745 to 888 (KSAD…ELLK), 963 to 1030 (EQRQ…FYNQ), and 1043 to 1085 (KFNR…QQQS). The span at 503-518 (STTPVPATTVSSPSPT) shows a compositional bias: low complexity. A phosphoserine mark is found at Ser514 and Ser516. Residues 532-542 (GYSNGNAQKTA) show a composition bias toward polar residues. The span at 588-609 (NGNKSSSTSSNNSSSSNHKSIN) shows a compositional bias: low complexity. The segment covering 642–651 (MTDDHTEKPK) has biased composition (basic and acidic residues). A phosphothreonine mark is found at Thr660 and Thr664. Residues Ser674 and Ser676 each carry the phosphoserine modification. Residues 705–730 (TNGHSKTNGSLTNGSASSSVHVNNSK) are compositionally biased toward polar residues. Phosphoserine is present on Ser749. Acidic residues predominate over residues 749–758 (SDDDDDEEES). Residues 768–778 (PQKQSQSQSKA) are compositionally biased toward low complexity. The span at 779 to 788 (PPSPKTPPSP) shows a compositional bias: pro residues. Ser781 is subject to Phosphoserine. At Thr784 the chain carries Phosphothreonine. Ser787 is subject to Phosphoserine. Residues 805-818 (EVDDIDDDDDEEEE) are compositionally biased toward acidic residues. Polar residues predominate over residues 822–844 (KIQTPSKTHRNPFSSSKPSTDSP). Thr825 bears the Phosphothreonine mark. Position 843 is a phosphoserine (Ser843). Position 846 is a phosphothreonine (Thr846). Over residues 859–884 (PVKSHQQPRVGNGYQSEATSNGSTIN) the composition is skewed to polar residues. Composition is skewed to low complexity over residues 987–998 (SGSAKGNNASNS) and 1056–1066 (QQQRALQRHLA).

Belongs to the peptidase C19 family. As to quaternary structure, interacts with atms/PAF1, but not with CycT.

Its subcellular location is the nucleus. It localises to the nucleolus. The catalysed reaction is Thiol-dependent hydrolysis of ester, thioester, amide, peptide and isopeptide bonds formed by the C-terminal Gly of ubiquitin (a 76-residue protein attached to proteins as an intracellular targeting signal).. Required for maintaining multiple types of adult stem cells, including male and female germline, epithelial follicle cell and intestinal stem cells. May function as a transcriptional repressor by continually deubiquiting histone H2B at the promoters of genes critical for cellular differentiation, thereby preventing histone H3 'Lys-4' trimethylation (H3K4). Controls selective autophagy activation by ubiquitinated proteins. This is Ubiquitin carboxyl-terminal hydrolase 36 (Usp36) from Drosophila erecta (Fruit fly).